A 353-amino-acid chain; its full sequence is Heterogeneous nuclear ribonucleoproteins A2/B1 (353 aa).

Methionine 1 bears the N-acetylmethionine mark. The residue at position 4 (threonine 4) is a Phosphothreonine. A Nuclear localization signal motif is present at residues 9–15 (PLERKKR). RRM domains lie at 21–104 (RKLF…ESGK) and 112–191 (KKLF…LSRQ). A Glycyl lysine isopeptide (Lys-Gly) (interchain with G-Cter in SUMO2) cross-link involves residue lysine 22. Serine 29 carries the phosphoserine modification. Arginine 38 is modified (omega-N-methylarginine). Serine 85 is modified (phosphoserine). Lysine 104 carries the post-translational modification N6,N6-dimethyllysine; alternate. Lysine 104 is covalently cross-linked (Glycyl lysine isopeptide (Lys-Gly) (interchain with G-Cter in SUMO2); alternate). Residues lysine 112, lysine 120, and lysine 137 each participate in a glycyl lysine isopeptide (Lys-Gly) (interchain with G-Cter in SUMO2) cross-link. Position 140 is a phosphothreonine (threonine 140). Serine 149 carries the phosphoserine modification. A Glycyl lysine isopeptide (Lys-Gly) (interchain with G-Cter in SUMO2) cross-link involves residue lysine 152. Threonine 159 is modified (phosphothreonine). Residues lysine 168 and lysine 173 each participate in a glycyl lysine isopeptide (Lys-Gly) (interchain with G-Cter in SUMO2); alternate cross-link. An N6-acetyllysine; alternate mark is found at lysine 168 and lysine 173. Threonine 176 carries the phosphothreonine modification. A Glycyl lysine isopeptide (Lys-Gly) (interchain with G-Cter in SUMO2) cross-link involves residue lysine 186. A phosphoserine mark is found at serine 189 and serine 201. The segment at 193–353 (MQEVQSSRSG…SGGYGGRSRY (161 aa)) is disordered. Over residues 202–223 (GRGGNFGFGDSRGGGGNFGPGP) the composition is skewed to gly residues. At arginine 203 the chain carries Asymmetric dimethylarginine; alternate. Residue arginine 203 is modified to Dimethylated arginine; alternate. At arginine 203 the chain carries Omega-N-methylarginine; alternate. At serine 212 the chain carries Phosphoserine. Arginine 213 carries the asymmetric dimethylarginine; alternate modification. Residue arginine 213 is modified to Dimethylated arginine; alternate. The residue at position 213 (arginine 213) is an Omega-N-methylarginine; alternate. Serine 225 is modified (phosphoserine). Arginine 228 is subject to Omega-N-methylarginine. Phosphoserine is present on residues serine 231 and serine 236. Arginine 238 bears the Omega-N-methylarginine mark. Position 259 is a phosphoserine (serine 259). The residue at position 266 (arginine 266) is an Asymmetric dimethylarginine; alternate. Arginine 266 is subject to Omega-N-methylarginine; alternate. A nuclear targeting sequence region spans residues 308–347 (QQPSNYGPMKSGNFGGSRNMGGPYGGGNYGPGGSGGSGGY). Gly residues predominate over residues 320 to 353 (NFGGSRNMGGPYGGGNYGPGGSGGSGGYGGRSRY). At serine 324 the chain carries Phosphoserine. Arginine 325 carries the omega-N-methylarginine modification. Tyrosine 331 carries the post-translational modification Phosphotyrosine. Phosphoserine is present on residues serine 341 and serine 344. Tyrosine 347 is modified (phosphotyrosine). At arginine 350 the chain carries Omega-N-methylarginine.

In terms of assembly, identified in the spliceosome C complex. Identified in a IGF2BP1-dependent mRNP granule complex containing untranslated mRNAs. Interacts with IGF2BP1. Interacts with C9orf72. Interacts with DGCR8. Interacts with TARDBP. Interacts with CKAP5. Interacts with PPIA/CYPA. Interacts (via C-terminus) with FAM76B; the interaction results in retention of HNRNPA2B1 in the nucleus and inhibition of the NF-kappa-B-mediated inflammatory pathway. Interacts with NF-kappa-B inhibitors NFKBIA and NFKBIE; the interaction may be mediated by the RRM2 domain of HNRNPA2B1, and HNRNPA2B1 may interact simultaneously with FAM76B and either NFKBIA or NFKBIE to form a complex. Post-translationally, sumoylated in exosomes, promoting miRNAs-binding. In terms of processing, asymmetric dimethylation at Arg-266 constitutes the major methylation site. According to a report, methylation affects subcellular location and promotes nuclear localization. According to another report, methylation at Arg-266 does not influence nucleocytoplasmic shuttling.

It localises to the nucleus. The protein resides in the nucleoplasm. It is found in the cytoplasmic granule. Its subcellular location is the secreted. The protein localises to the extracellular exosome. Its function is as follows. Heterogeneous nuclear ribonucleoprotein (hnRNP) that associates with nascent pre-mRNAs, packaging them into hnRNP particles. The hnRNP particle arrangement on nascent hnRNA is non-random and sequence-dependent and serves to condense and stabilize the transcripts and minimize tangling and knotting. Packaging plays a role in various processes such as transcription, pre-mRNA processing, RNA nuclear export, subcellular location, mRNA translation and stability of mature mRNAs. Forms hnRNP particles with at least 20 other different hnRNP and heterogeneous nuclear RNA in the nucleus. Involved in transport of specific mRNAs to the cytoplasm in oligodendrocytes and neurons: acts by specifically recognizing and binding the A2RE (21 nucleotide hnRNP A2 response element) or the A2RE11 (derivative 11 nucleotide oligonucleotide) sequence motifs present on some mRNAs, and promotes their transport to the cytoplasm. Specifically binds single-stranded telomeric DNA sequences, protecting telomeric DNA repeat against endonuclease digestion. Also binds other RNA molecules, such as primary miRNA (pri-miRNAs): acts as a nuclear 'reader' of the N6-methyladenosine (m6A) mark by specifically recognizing and binding a subset of nuclear m6A-containing pri-miRNAs. Binding to m6A-containing pri-miRNAs promotes pri-miRNA processing by enhancing binding of DGCR8 to pri-miRNA transcripts. Involved in miRNA sorting into exosomes following sumoylation, possibly by binding (m6A)-containing pre-miRNAs. Acts as a regulator of efficiency of mRNA splicing, possibly by binding to m6A-containing pre-mRNAs. Plays a role in the splicing of pyruvate kinase PKM by binding repressively to sequences flanking PKM exon 9, inhibiting exon 9 inclusion and resulting in exon 10 inclusion and production of the PKM M2 isoform. The chain is Heterogeneous nuclear ribonucleoproteins A2/B1 (HNRNPA2B1) from Pongo abelii (Sumatran orangutan).